The following is a 400-amino-acid chain: tRNA-specific 2-thiouridylase MnmA (400 aa).

Residues 19–26 (AMSGGVDS) and Leu-45 contribute to the ATP site. The active-site Nucleophile is Cys-113. The cysteines at positions 113 and 210 are disulfide-linked. Gly-137 serves as a coordination point for ATP. Residues 160-162 (RDQ) are interaction with tRNA. Residue Cys-210 is the Cysteine persulfide intermediate of the active site.

This sequence belongs to the MnmA/TRMU family.

The protein localises to the cytoplasm. It catalyses the reaction S-sulfanyl-L-cysteinyl-[protein] + uridine(34) in tRNA + AH2 + ATP = 2-thiouridine(34) in tRNA + L-cysteinyl-[protein] + A + AMP + diphosphate + H(+). Its function is as follows. Catalyzes the 2-thiolation of uridine at the wobble position (U34) of tRNA, leading to the formation of s(2)U34. The protein is tRNA-specific 2-thiouridylase MnmA of Nitrobacter winogradskyi (strain ATCC 25391 / DSM 10237 / CIP 104748 / NCIMB 11846 / Nb-255).